Here is a 376-residue protein sequence, read N- to C-terminus: Putative clathrin assembly protein At1g25240 (376 aa).

Positions 25–156 (KTSFRNPDLD…FFLSDQIRRR (132 aa)) constitute an ENTH domain.

It localises to the membrane. The protein resides in the clathrin-coated pit. It is found in the golgi apparatus. Its subcellular location is the cytoplasmic vesicle. The protein localises to the clathrin-coated vesicle. This Arabidopsis thaliana (Mouse-ear cress) protein is Putative clathrin assembly protein At1g25240.